We begin with the raw amino-acid sequence, 302 residues long: Urease accessory protein UreD (302 aa).

Belongs to the UreD family. As to quaternary structure, ureD, UreF and UreG form a complex that acts as a GTP-hydrolysis-dependent molecular chaperone, activating the urease apoprotein by helping to assemble the nickel containing metallocenter of UreC. The UreE protein probably delivers the nickel.

It is found in the cytoplasm. Its function is as follows. Required for maturation of urease via the functional incorporation of the urease nickel metallocenter. The sequence is that of Urease accessory protein UreD from Pseudoalteromonas translucida (strain TAC 125).